The sequence spans 419 residues: Adenylosuccinate synthetase 1 (419 aa).

11 to 17 (GDEGKGK) provides a ligand contact to GTP. D12 acts as the Proton acceptor in catalysis. Mg(2+)-binding residues include D12 and G39. IMP is bound by residues 12–15 (DEGK), 37–40 (NAGH), R138, Q220, and R298. H40 (proton donor) is an active-site residue. 294–300 (TVSKRPR) serves as a coordination point for substrate. GTP contacts are provided by residues R300, 326 to 328 (NVD), and 407 to 409 (SYG).

This sequence belongs to the adenylosuccinate synthetase family. In terms of assembly, homodimer. Mg(2+) serves as cofactor.

It is found in the cytoplasm. It carries out the reaction IMP + L-aspartate + GTP = N(6)-(1,2-dicarboxyethyl)-AMP + GDP + phosphate + 2 H(+). Its pathway is purine metabolism; AMP biosynthesis via de novo pathway; AMP from IMP: step 1/2. Plays an important role in the de novo pathway of purine nucleotide biosynthesis. Catalyzes the first committed step in the biosynthesis of AMP from IMP. This Photorhabdus laumondii subsp. laumondii (strain DSM 15139 / CIP 105565 / TT01) (Photorhabdus luminescens subsp. laumondii) protein is Adenylosuccinate synthetase 1.